The sequence spans 258 residues: Deoxyribose-phosphate aldolase (258 aa).

Aspartate 102 serves as the catalytic Proton donor/acceptor. Catalysis depends on lysine 165, which acts as the Schiff-base intermediate with acetaldehyde. The active-site Proton donor/acceptor is the lysine 199.

The protein belongs to the DeoC/FbaB aldolase family. DeoC type 2 subfamily.

Its subcellular location is the cytoplasm. It carries out the reaction 2-deoxy-D-ribose 5-phosphate = D-glyceraldehyde 3-phosphate + acetaldehyde. It functions in the pathway carbohydrate degradation; 2-deoxy-D-ribose 1-phosphate degradation; D-glyceraldehyde 3-phosphate and acetaldehyde from 2-deoxy-alpha-D-ribose 1-phosphate: step 2/2. Its function is as follows. Catalyzes a reversible aldol reaction between acetaldehyde and D-glyceraldehyde 3-phosphate to generate 2-deoxy-D-ribose 5-phosphate. The polypeptide is Deoxyribose-phosphate aldolase (Vibrio vulnificus (strain CMCP6)).